The primary structure comprises 883 residues: Phosphoenolpyruvate carboxylase (883 aa).

Residues His138 and Lys546 contribute to the active site.

Belongs to the PEPCase type 1 family. As to quaternary structure, homotetramer. The cofactor is Mg(2+).

The catalysed reaction is oxaloacetate + phosphate = phosphoenolpyruvate + hydrogencarbonate. With respect to regulation, the enzyme has distinct binding sites for each of the allosteric effectors such as acetyl-CoA, fructose 1,6-bisphosphate, guanosine 3'-diphosphate 5'-diphosphate, long chain fatty acids, and L-aspartate. Its function is as follows. Forms oxaloacetate, a four-carbon dicarboxylic acid source for the tricarboxylic acid cycle. The chain is Phosphoenolpyruvate carboxylase (ppc) from Salmonella typhi.